The following is a 191-amino-acid chain: Gamma-glutamylaminecyclotransferase B (191 aa).

A substrate-binding site is contributed by 7-10 (YGTL). Glu82 functions as the Proton acceptor in the catalytic mechanism. The span at 155 to 178 (SADFSQNSEQEIKKNNSLQILTST) shows a compositional bias: polar residues. A disordered region spans residues 155-191 (SADFSQNSEQEIKKNNSLQILTSTGDDHDVNFRGPLQ).

The protein belongs to the gamma-glutamylcyclotransferase family.

The enzyme catalyses epsilon-(gamma-L-glutamyl)-L-lysine = 5-oxo-L-proline + L-lysine. May contribute to degradation of proteins cross-linked by transglutaminases by degrading the cross-link between a lysine and a glutamic acid residue. Catalyzes the formation of 5-oxo-L-proline from L-gamma-glutamyl-L-epsilon-lysine. This Danio rerio (Zebrafish) protein is Gamma-glutamylaminecyclotransferase B (ggact.2).